We begin with the raw amino-acid sequence, 508 residues long: Argininosuccinate lyase (508 aa).

The protein belongs to the lyase 1 family. Argininosuccinate lyase subfamily.

The protein localises to the cytoplasm. It catalyses the reaction 2-(N(omega)-L-arginino)succinate = fumarate + L-arginine. The protein operates within amino-acid biosynthesis; L-arginine biosynthesis; L-arginine from L-ornithine and carbamoyl phosphate: step 3/3. The sequence is that of Argininosuccinate lyase from Methanopyrus kandleri (strain AV19 / DSM 6324 / JCM 9639 / NBRC 100938).